Reading from the N-terminus, the 137-residue chain is Small ribosomal subunit protein uS9 (137 aa).

Positions 103 to 137 (PPLKAEGYLTRDPRAKERKKYGLHKARKAPQYSKR) are disordered. Basic residues predominate over residues 118-137 (KERKKYGLHKARKAPQYSKR).

Belongs to the universal ribosomal protein uS9 family.

The protein is Small ribosomal subunit protein uS9 of Crocosphaera subtropica (strain ATCC 51142 / BH68) (Cyanothece sp. (strain ATCC 51142)).